We begin with the raw amino-acid sequence, 217 residues long: MTGKITTLLFDLDGTLINTNELIIKTFQVTFQEFMPDRVFTREDILPFIGPSLMETFREINPAHADEMRAFYREYNLKHHDDLILEYDGVYEAIRALYEEDYKLGIVSTKMYDTIMRGLKVTGLDKFFQVVIGLDQVSNAKPDPEGIEMALSLLNATKEEAIMIGDNYHDIEAGKNAETLTAGVAWAIKGPEHLAQFQPDFMLEKMSDLLAIVRDEE.

Residue aspartate 11 is the Nucleophile of the active site.

It belongs to the HAD-like hydrolase superfamily. PpaX family. Mg(2+) serves as cofactor.

It carries out the reaction diphosphate + H2O = 2 phosphate + H(+). Its function is as follows. Hydrolyzes pyrophosphate formed during P-Ser-HPr dephosphorylation by HPrK/P. Might play a role in controlling the intracellular pyrophosphate pool. The polypeptide is Pyrophosphatase PpaX (Listeria monocytogenes serotype 4b (strain CLIP80459)).